Consider the following 210-residue polypeptide: Menaquinone reductase, multiheme cytochrome c subunit (210 aa).

A helical transmembrane segment spans residues 20 to 40 (GGAAPFFVGLVVALVFGWWAF). Residues Cys-67, Cys-70, His-71, Cys-88, Cys-91, His-92, Cys-140, Cys-143, His-144, Cys-152, Cys-155, His-156, Cys-186, Cys-189, His-190, Cys-205, Cys-208, and His-209 each contribute to the heme site.

It belongs to the multiheme cytochrome c family. As to quaternary structure, the Qrc complex is composed of four subunits: QrcA, QrcB, QrcC and QrcD. Can form a supercomplex with the [NiFe] hydrogenase HynA1 and the tetraheme Type I cytochrome c3 TpIc(3), its physiological electron donors. Heme c serves as cofactor.

The protein localises to the cell inner membrane. In terms of biological role, component of the respiratory Qrc complex, that catalyzes the reduction of the menaquinone pool using electrons transferred from the reduced periplasmic cytochrome c3, and which is probably involved in sulfate respiration. Is likely essential for growth on H(2) or formate since the periplasmic hydrogenases and/or formate dehydrogenases act as primary electron donors for the Qrc complex. This is Menaquinone reductase, multiheme cytochrome c subunit from Nitratidesulfovibrio vulgaris (strain ATCC 29579 / DSM 644 / CCUG 34227 / NCIMB 8303 / VKM B-1760 / Hildenborough) (Desulfovibrio vulgaris).